The chain runs to 138 residues: Iron sulfur cluster assembly protein 1 (138 aa).

This sequence belongs to the NifU family. In terms of assembly, component of the core Fe-S cluster (ISC) assembly machinery. It depends on [2Fe-2S] cluster as a cofactor.

It is found in the cytoplasm. Its pathway is cofactor biosynthesis; iron-sulfur cluster biosynthesis. Functionally, scaffold protein for the de novo synthesis of iron-sulfur (Fe-S) clusters within mitosomes, which is required for maturation of both [2Fe-2S] and [4Fe-4S] proteins. First, a [2Fe-2S] cluster is transiently assembled on the scaffold protein ISU1. In a second step, the cluster is released from ISU1, transferred to a glutaredoxin, followed by the formation of [2Fe-2S] proteins, the synthesis of [4Fe-4S] clusters and their target-specific insertion into the recipient apoproteins. Cluster assembly on ISU1 depends on the function of the cysteine desulfurase complex NFS1-ISD11, which serves as the sulfur donor for cluster synthesis, the iron-binding protein frataxin as the putative iron donor, and the electron transfer chain comprised of ferredoxin reductase and ferredoxin, which receive their electrons from NADH. The protein is Iron sulfur cluster assembly protein 1 (ISU1) of Trachipleistophora hominis (Microsporidian parasite).